Reading from the N-terminus, the 264-residue chain is Thymidylate synthase (264 aa).

Arginine 21 is a dUMP binding site. Position 51 (histidine 51) interacts with (6R)-5,10-methylene-5,6,7,8-tetrahydrofolate. DUMP is bound at residue 126–127; that stretch reads RR. Cysteine 146 (nucleophile) is an active-site residue. Residues 166–169, asparagine 177, and 207–209 each bind dUMP; these read RSCD and HLY. Aspartate 169 is a (6R)-5,10-methylene-5,6,7,8-tetrahydrofolate binding site. (6R)-5,10-methylene-5,6,7,8-tetrahydrofolate is bound at residue alanine 263.

Belongs to the thymidylate synthase family. Bacterial-type ThyA subfamily. In terms of assembly, homodimer.

It is found in the cytoplasm. The enzyme catalyses dUMP + (6R)-5,10-methylene-5,6,7,8-tetrahydrofolate = 7,8-dihydrofolate + dTMP. The protein operates within pyrimidine metabolism; dTTP biosynthesis. Functionally, catalyzes the reductive methylation of 2'-deoxyuridine-5'-monophosphate (dUMP) to 2'-deoxythymidine-5'-monophosphate (dTMP) while utilizing 5,10-methylenetetrahydrofolate (mTHF) as the methyl donor and reductant in the reaction, yielding dihydrofolate (DHF) as a by-product. This enzymatic reaction provides an intracellular de novo source of dTMP, an essential precursor for DNA biosynthesis. The protein is Thymidylate synthase of Edwardsiella ictaluri (strain 93-146).